A 163-amino-acid chain; its full sequence is Probable chemoreceptor glutamine deamidase CheD (163 aa).

The protein belongs to the CheD family.

The catalysed reaction is L-glutaminyl-[protein] + H2O = L-glutamyl-[protein] + NH4(+). Probably deamidates glutamine residues to glutamate on methyl-accepting chemotaxis receptors (MCPs), playing an important role in chemotaxis. This Borrelia garinii subsp. bavariensis (strain ATCC BAA-2496 / DSM 23469 / PBi) (Borreliella bavariensis) protein is Probable chemoreceptor glutamine deamidase CheD.